The sequence spans 245 residues: tRNA pseudouridine synthase A (245 aa).

The active-site Nucleophile is aspartate 52. Position 111 (tyrosine 111) interacts with substrate.

This sequence belongs to the tRNA pseudouridine synthase TruA family. In terms of assembly, homodimer.

It catalyses the reaction uridine(38/39/40) in tRNA = pseudouridine(38/39/40) in tRNA. Functionally, formation of pseudouridine at positions 38, 39 and 40 in the anticodon stem and loop of transfer RNAs. This is tRNA pseudouridine synthase A from Thermotoga neapolitana (strain ATCC 49049 / DSM 4359 / NBRC 107923 / NS-E).